A 231-amino-acid polypeptide reads, in one-letter code: MAKVSKRMKEISAKINAEKKYPVSEAFDLLREVSSVKFVESVDVSVALGVDPRKSDQVVRGASVLPNGTGKTVRVAVFAKGPAADAAKEAGAEVVGMEDLADEVKKGNMDFDVVIASPDSMRVVGQLGQILGPKGLMPNPKVGTVTMDVAKAVRDAKAGQVRYRVDKAGIIHTTIGKVNFTSDALKQNLERLLTDLKKAKPAVSKGIYLKKVSVSSTMGPGINVDFSDLNI.

This sequence belongs to the universal ribosomal protein uL1 family. In terms of assembly, part of the 50S ribosomal subunit.

Binds directly to 23S rRNA. The L1 stalk is quite mobile in the ribosome, and is involved in E site tRNA release. Its function is as follows. Protein L1 is also a translational repressor protein, it controls the translation of the L11 operon by binding to its mRNA. The polypeptide is Large ribosomal subunit protein uL1 (Francisella tularensis subsp. tularensis (strain WY96-3418)).